Here is a 931-residue protein sequence, read N- to C-terminus: Probable zinc protease PqqL (931 aa).

Residue His80 participates in Zn(2+) binding. Catalysis depends on Glu83, which acts as the Proton acceptor. 2 residues coordinate Zn(2+): His84 and Glu160.

The protein belongs to the peptidase M16 family. The cofactor is Zn(2+).

In Escherichia coli (strain K12), this protein is Probable zinc protease PqqL (pqqL).